Reading from the N-terminus, the 563-residue chain is Putative cytochrome c oxidase subunit 1-beta (563 aa).

The next 7 membrane-spanning stretches (helical) occupy residues 34-54 (IGHL…VMAL), 76-96 (LFTL…FAGF), 117-137 (MLSY…LAVP), 164-184 (MWIM…VNFL), 208-228 (LFTS…LLVL), 252-272 (LFWF…FGII), and 284-304 (IFGY…SVVV). His-80 contributes to the Fe(II)-heme a binding site. Cu cation is bound by residues His-258 and Tyr-262. The segment at residues 258 to 262 (HPEVY) is a cross-link (1'-histidyl-3'-tyrosine (His-Tyr)). Cu cation-binding residues include His-307 and His-308. 2 consecutive transmembrane segments (helical) span residues 309-329 (MFAT…LIAV) and 353-373 (MLWA…GVIL). His-391 contacts heme a3. The next 3 membrane-spanning stretches (helical) occupy residues 392–412 (FHYV…YFWW), 427–447 (IHFW…HWLG), and 470–490 (LSTI…YNVW). His-393 provides a ligand contact to Fe(II)-heme a. The disordered stretch occupies residues 536–563 (AFDLHHPAHAGEAPQPEPKHEQADREPS). Residues 552-563 (EPKHEQADREPS) show a composition bias toward basic and acidic residues.

It belongs to the heme-copper respiratory oxidase family. As to quaternary structure, associates with subunits II, III and IV to form cytochrome c oxidase. Cu(2+) serves as cofactor. It depends on heme as a cofactor.

It localises to the cell membrane. It carries out the reaction 4 Fe(II)-[cytochrome c] + O2 + 8 H(+)(in) = 4 Fe(III)-[cytochrome c] + 2 H2O + 4 H(+)(out). It participates in energy metabolism; oxidative phosphorylation. In terms of biological role, cytochrome c oxidase is the component of the respiratory chain that catalyzes the reduction of oxygen to water. Subunits 1-3 form the functional core of the enzyme complex. CO I is the catalytic subunit of the enzyme. Electrons originating in cytochrome c are transferred via the copper A center of subunit 2 and heme A of subunit 1 to the bimetallic center formed by heme A3 and copper B. This Streptomyces avermitilis (strain ATCC 31267 / DSM 46492 / JCM 5070 / NBRC 14893 / NCIMB 12804 / NRRL 8165 / MA-4680) protein is Putative cytochrome c oxidase subunit 1-beta (ctaD2).